A 386-amino-acid polypeptide reads, in one-letter code: Acetate kinase (386 aa).

N7 lines the Mg(2+) pocket. K14 lines the ATP pocket. Residue R78 participates in substrate binding. D135 functions as the Proton donor/acceptor in the catalytic mechanism. ATP contacts are provided by residues 195-199 (HLGNG), 268-270 (DMR), and 316-320 (GIGEN). E370 is a binding site for Mg(2+).

Belongs to the acetokinase family. Homodimer. Requires Mg(2+) as cofactor. Mn(2+) is required as a cofactor.

The protein localises to the cytoplasm. It catalyses the reaction acetate + ATP = acetyl phosphate + ADP. It participates in metabolic intermediate biosynthesis; acetyl-CoA biosynthesis; acetyl-CoA from acetate: step 1/2. In terms of biological role, catalyzes the formation of acetyl phosphate from acetate and ATP. Can also catalyze the reverse reaction. The sequence is that of Acetate kinase from Arthrobacter sp. (strain FB24).